A 610-amino-acid polypeptide reads, in one-letter code: Elongation factor 4 (610 aa).

One can recognise a tr-type G domain in the interval 11–193 (KYIRNFSIVA…QIVTKIPAPA (183 aa)). Residues 23–28 (DHGKST) and 140–143 (NKID) each bind GTP.

It belongs to the TRAFAC class translation factor GTPase superfamily. Classic translation factor GTPase family. LepA subfamily.

It is found in the cell membrane. It carries out the reaction GTP + H2O = GDP + phosphate + H(+). Its function is as follows. Required for accurate and efficient protein synthesis under certain stress conditions. May act as a fidelity factor of the translation reaction, by catalyzing a one-codon backward translocation of tRNAs on improperly translocated ribosomes. Back-translocation proceeds from a post-translocation (POST) complex to a pre-translocation (PRE) complex, thus giving elongation factor G a second chance to translocate the tRNAs correctly. Binds to ribosomes in a GTP-dependent manner. The chain is Elongation factor 4 from Levilactobacillus brevis (strain ATCC 367 / BCRC 12310 / CIP 105137 / JCM 1170 / LMG 11437 / NCIMB 947 / NCTC 947) (Lactobacillus brevis).